The following is a 491-amino-acid chain: DEAD-box ATP-dependent RNA helicase 36 (491 aa).

The segment covering 1 to 10 (MEEPTPEEEG) has biased composition (acidic residues). The segment at 1 to 56 (MEEPTPEEEGGITIMSKSRKNPKTVVNIQSQKLDSDQNTPQFEKFTNPNPSSDTTS) is disordered. The segment covering 24-56 (TVVNIQSQKLDSDQNTPQFEKFTNPNPSSDTTS) has biased composition (polar residues). Residues 58 to 86 (TNFEGLGLAEWAVETCKELGMRKPTPVQT) carry the Q motif motif. The 174-residue stretch at 89 to 262 (VPKILAGRDV…EHSSNKAYFY (174 aa)) folds into the Helicase ATP-binding domain. 102–109 (AQTGSGKT) contacts ATP. Positions 210–213 (DEAD) match the DEAD box motif. Positions 289–438 (YLVHILSQME…NKKVITDSLE (150 aa)) constitute a Helicase C-terminal domain. The segment at 471–491 (KTLADKGLLKKRGKRQKSTEN) is disordered. Residues 479–491 (LKKRGKRQKSTEN) show a composition bias toward basic residues.

Belongs to the DEAD box helicase family. DDX49/DBP8 subfamily.

It catalyses the reaction ATP + H2O = ADP + phosphate + H(+). The protein is DEAD-box ATP-dependent RNA helicase 36 (RH36) of Arabidopsis thaliana (Mouse-ear cress).